A 453-amino-acid polypeptide reads, in one-letter code: MYLIIKKTHKLPHWLQKVSLSIMLIIFLWKPALLADMHIEITCGVNAAHPIAVIPFTCVSNQYNKSISIEDIASIIAADLRNSSKFNTIPVEYLPHKPTKVSDVIPTFWEKLGINIIVLGTVHINYDESYIISYHLIDTSSNPALIISENQYSVEKKWLRYVAHAISNEIFEKLTGIKGAFCTRIAYVLRIHNDHYPYELYISDYDGHNQISICRSTEPLMSPAWSPDGKKIAYVTFASGHSELVIQALNTGLVNNIVSFPGHNGAPSFSPDCKKLAFSLSKTGSLNLYIMDLESGEITQLTKNRNNNTEPSWFPDNQNIAYTSDQGGSPQIYKINVKTTEIQRLSWLHTSNQNPNVSSDGTFIIMVNRHQGKQNIAKLNLLTGQEEILTDTLLADSPSIAPNNTMVLYSNINKDLTTKSNLELISIDGHFKAHIQGDQGDIRFPTWSPLHLE.

The N-terminal stretch at M1–L34 is a signal peptide.

The protein belongs to the TolB family. The Tol-Pal system is composed of five core proteins: the inner membrane proteins TolA, TolQ and TolR, the periplasmic protein TolB and the outer membrane protein Pal. They form a network linking the inner and outer membranes and the peptidoglycan layer.

It is found in the periplasm. In terms of biological role, part of the Tol-Pal system, which plays a role in outer membrane invagination during cell division and is important for maintaining outer membrane integrity. TolB occupies a key intermediary position in the Tol-Pal system because it communicates directly with both membrane-embedded components, Pal in the outer membrane and TolA in the inner membrane. This chain is Tol-Pal system protein TolB, found in Blochmanniella pennsylvanica (strain BPEN).